The following is a 319-amino-acid chain: ATP-dependent 6-phosphofructokinase (319 aa).

G11 is a binding site for ATP. Residue 21–25 (RAVVR) coordinates ADP. ATP-binding positions include 72-73 (RC) and 102-105 (GDGS). D103 is a binding site for Mg(2+). Position 125 to 127 (125 to 127 (TID)) interacts with substrate. The Proton acceptor role is filled by D127. R154 contributes to the ADP binding site. Substrate is bound by residues R162 and 169–171 (MGR). ADP-binding positions include 185-187 (GAE), R211, and 213-215 (KLH). Substrate contacts are provided by residues E222, R243, and 249-252 (HLQR).

The protein belongs to the phosphofructokinase type A (PFKA) family. ATP-dependent PFK group I subfamily. Prokaryotic clade 'B1' sub-subfamily. As to quaternary structure, homotetramer. Requires Mg(2+) as cofactor.

The protein resides in the cytoplasm. The catalysed reaction is beta-D-fructose 6-phosphate + ATP = beta-D-fructose 1,6-bisphosphate + ADP + H(+). It participates in carbohydrate degradation; glycolysis; D-glyceraldehyde 3-phosphate and glycerone phosphate from D-glucose: step 3/4. Allosterically activated by ADP and other diphosphonucleosides, and allosterically inhibited by phosphoenolpyruvate. Its function is as follows. Catalyzes the phosphorylation of D-fructose 6-phosphate to fructose 1,6-bisphosphate by ATP, the first committing step of glycolysis. In Clostridium novyi (strain NT), this protein is ATP-dependent 6-phosphofructokinase.